A 477-amino-acid polypeptide reads, in one-letter code: Bifunctional protein HldE (477 aa).

The tract at residues 1 to 318 (MKVNLPAFER…ENAVRGRADT (318 aa)) is ribokinase. 195–198 (NLSE) is an ATP binding site. D264 is a catalytic residue. The cytidylyltransferase stretch occupies residues 344-477 (MTNGVFDILH…IKKIQTESEK (134 aa)).

In the N-terminal section; belongs to the carbohydrate kinase PfkB family. The protein in the C-terminal section; belongs to the cytidylyltransferase family. As to quaternary structure, homodimer.

The enzyme catalyses D-glycero-beta-D-manno-heptose 7-phosphate + ATP = D-glycero-beta-D-manno-heptose 1,7-bisphosphate + ADP + H(+). It carries out the reaction D-glycero-beta-D-manno-heptose 1-phosphate + ATP + H(+) = ADP-D-glycero-beta-D-manno-heptose + diphosphate. It functions in the pathway nucleotide-sugar biosynthesis; ADP-L-glycero-beta-D-manno-heptose biosynthesis; ADP-L-glycero-beta-D-manno-heptose from D-glycero-beta-D-manno-heptose 7-phosphate: step 1/4. It participates in nucleotide-sugar biosynthesis; ADP-L-glycero-beta-D-manno-heptose biosynthesis; ADP-L-glycero-beta-D-manno-heptose from D-glycero-beta-D-manno-heptose 7-phosphate: step 3/4. Catalyzes the phosphorylation of D-glycero-D-manno-heptose 7-phosphate at the C-1 position to selectively form D-glycero-beta-D-manno-heptose-1,7-bisphosphate. Functionally, catalyzes the ADP transfer from ATP to D-glycero-beta-D-manno-heptose 1-phosphate, yielding ADP-D-glycero-beta-D-manno-heptose. The polypeptide is Bifunctional protein HldE (Salmonella dublin (strain CT_02021853)).